A 251-amino-acid polypeptide reads, in one-letter code: Large ribosomal subunit protein uL4 (251 aa).

Belongs to the universal ribosomal protein uL4 family. Part of the 50S ribosomal subunit.

Its function is as follows. One of the primary rRNA binding proteins, this protein initially binds near the 5'-end of the 23S rRNA. It is important during the early stages of 50S assembly. It makes multiple contacts with different domains of the 23S rRNA in the assembled 50S subunit and ribosome. In terms of biological role, forms part of the polypeptide exit tunnel. This chain is Large ribosomal subunit protein uL4, found in Methanothrix thermoacetophila (strain DSM 6194 / JCM 14653 / NBRC 101360 / PT) (Methanosaeta thermophila).